The sequence spans 290 residues: tRNA dimethylallyltransferase (290 aa).

11 to 18 (GPTASGKS) is a binding site for ATP. 13–18 (TASGKS) provides a ligand contact to substrate. Interaction with substrate tRNA stretches follow at residues 36-39 (DSMQ) and 158-162 (QRIVR).

The protein belongs to the IPP transferase family. In terms of assembly, monomer. The cofactor is Mg(2+).

It catalyses the reaction adenosine(37) in tRNA + dimethylallyl diphosphate = N(6)-dimethylallyladenosine(37) in tRNA + diphosphate. Its function is as follows. Catalyzes the transfer of a dimethylallyl group onto the adenine at position 37 in tRNAs that read codons beginning with uridine, leading to the formation of N6-(dimethylallyl)adenosine (i(6)A). This is tRNA dimethylallyltransferase from Bartonella henselae (strain ATCC 49882 / DSM 28221 / CCUG 30454 / Houston 1) (Rochalimaea henselae).